The primary structure comprises 472 residues: ESX-3 secretion system protein EccD3 (472 aa).

Transmembrane regions (helical) follow at residues 121–141, 155–175, 183–203, 211–231, 236–256, 258–278, 327–347, 349–369, 381–401, 405–425, and 450–470; these read WGIA…ALLA, LAGL…GLLI, GIAL…LAVP, VLLG…IPSA, VVAF…AAGA, LLWQ…ALLV, QSGF…AIAV, PEAL…AATL, AWLL…YTAT, VAAF…VVVA, and GLDV…AWVL.

The protein belongs to the EccD/Snm4 family. Part of the ESX-3 / type VII secretion system (T7SS), which is composed of cytosolic and membrane components. The ESX-3 membrane complex is composed of EccB3, EccC3, EccD3 and EccE3.

It localises to the cell inner membrane. Functionally, part of the ESX-3 specialized secretion system, which is important for iron and zinc uptake or homeostasis. This Mycobacterium tuberculosis (strain CDC 1551 / Oshkosh) protein is ESX-3 secretion system protein EccD3.